Here is a 200-residue protein sequence, read N- to C-terminus: Nucleoside triphosphate pyrophosphatase (200 aa).

D79 acts as the Proton acceptor in catalysis.

This sequence belongs to the Maf family. Requires a divalent metal cation as cofactor.

The protein resides in the cytoplasm. The enzyme catalyses a ribonucleoside 5'-triphosphate + H2O = a ribonucleoside 5'-phosphate + diphosphate + H(+). It carries out the reaction a 2'-deoxyribonucleoside 5'-triphosphate + H2O = a 2'-deoxyribonucleoside 5'-phosphate + diphosphate + H(+). Nucleoside triphosphate pyrophosphatase. May have a dual role in cell division arrest and in preventing the incorporation of modified nucleotides into cellular nucleic acids. The polypeptide is Nucleoside triphosphate pyrophosphatase (Legionella pneumophila (strain Lens)).